Consider the following 110-residue polypeptide: UPF0213 protein DVU_3309 (110 aa).

One can recognise a GIY-YIG domain in the interval 8–83; that stretch reads EVWFVYLLRC…KRQPTDQKLA (76 aa).

The protein belongs to the UPF0213 family.

The sequence is that of UPF0213 protein DVU_3309 from Nitratidesulfovibrio vulgaris (strain ATCC 29579 / DSM 644 / CCUG 34227 / NCIMB 8303 / VKM B-1760 / Hildenborough) (Desulfovibrio vulgaris).